We begin with the raw amino-acid sequence, 210 residues long: Small ribosomal subunit protein uS3 (210 aa).

The 69-residue stretch at 38–106 folds into the KH type-2 domain; sequence LKSFLKKRLY…EVYLNIQEVR (69 aa).

It belongs to the universal ribosomal protein uS3 family. As to quaternary structure, part of the 30S ribosomal subunit. Forms a tight complex with proteins S10 and S14.

Binds the lower part of the 30S subunit head. Binds mRNA in the 70S ribosome, positioning it for translation. This chain is Small ribosomal subunit protein uS3, found in Geotalea daltonii (strain DSM 22248 / JCM 15807 / FRC-32) (Geobacter daltonii).